Consider the following 261-residue polypeptide: Thiazole synthase (261 aa).

Lysine 102 functions as the Schiff-base intermediate with DXP in the catalytic mechanism. 1-deoxy-D-xylulose 5-phosphate-binding positions include glycine 163, 189–190 (AG), and 211–212 (NT).

Belongs to the ThiG family. As to quaternary structure, homotetramer. Forms heterodimers with either ThiH or ThiS.

Its subcellular location is the cytoplasm. It carries out the reaction [ThiS sulfur-carrier protein]-C-terminal-Gly-aminoethanethioate + 2-iminoacetate + 1-deoxy-D-xylulose 5-phosphate = [ThiS sulfur-carrier protein]-C-terminal Gly-Gly + 2-[(2R,5Z)-2-carboxy-4-methylthiazol-5(2H)-ylidene]ethyl phosphate + 2 H2O + H(+). It functions in the pathway cofactor biosynthesis; thiamine diphosphate biosynthesis. Functionally, catalyzes the rearrangement of 1-deoxy-D-xylulose 5-phosphate (DXP) to produce the thiazole phosphate moiety of thiamine. Sulfur is provided by the thiocarboxylate moiety of the carrier protein ThiS. In vitro, sulfur can be provided by H(2)S. The protein is Thiazole synthase of Acinetobacter baylyi (strain ATCC 33305 / BD413 / ADP1).